The following is a 428-amino-acid chain: Glutamate-1-semialdehyde 2,1-aminomutase 1 (428 aa).

K267 bears the N6-(pyridoxal phosphate)lysine mark.

It belongs to the class-III pyridoxal-phosphate-dependent aminotransferase family. HemL subfamily. As to quaternary structure, homodimer. Pyridoxal 5'-phosphate is required as a cofactor.

Its subcellular location is the cytoplasm. The catalysed reaction is (S)-4-amino-5-oxopentanoate = 5-aminolevulinate. The protein operates within porphyrin-containing compound metabolism; protoporphyrin-IX biosynthesis; 5-aminolevulinate from L-glutamyl-tRNA(Glu): step 2/2. The sequence is that of Glutamate-1-semialdehyde 2,1-aminomutase 1 from Staphylococcus aureus (strain MW2).